The sequence spans 337 residues: DNA-directed RNA polymerase subunit alpha (337 aa).

The alpha N-terminal domain (alpha-NTD) stretch occupies residues 1–233 (MVREKVTVST…DLFIPFLHIE (233 aa)). The alpha C-terminal domain (alpha-CTD) stretch occupies residues 265–337 (KKIALKSIFI…FVIDLAKNEF (73 aa)).

This sequence belongs to the RNA polymerase alpha chain family. As to quaternary structure, in plastids the minimal PEP RNA polymerase catalytic core is composed of four subunits: alpha, beta, beta', and beta''. When a (nuclear-encoded) sigma factor is associated with the core the holoenzyme is formed, which can initiate transcription.

It localises to the plastid. The protein localises to the chloroplast. The catalysed reaction is RNA(n) + a ribonucleoside 5'-triphosphate = RNA(n+1) + diphosphate. Functionally, DNA-dependent RNA polymerase catalyzes the transcription of DNA into RNA using the four ribonucleoside triphosphates as substrates. This is DNA-directed RNA polymerase subunit alpha from Nicotiana tomentosiformis (Tobacco).